The following is a 446-amino-acid chain: Adenylosuccinate synthetase (446 aa).

Residues 20–26 and 48–50 each bind GTP; these read GDEGKGK and GHT. Catalysis depends on D21, which acts as the Proton acceptor. 2 residues coordinate Mg(2+): D21 and G48. IMP contacts are provided by residues 21-24, 46-49, T137, R151, Q232, T247, and R319; these read DEGK and NAGH. H49 serves as the catalytic Proton donor. Residue 315–321 participates in substrate binding; the sequence is SVTGRPR. GTP is bound by residues R321, 347–349, and 429–431; these read KLD and STG.

The protein belongs to the adenylosuccinate synthetase family. Homodimer. Mg(2+) is required as a cofactor.

Its subcellular location is the cytoplasm. It carries out the reaction IMP + L-aspartate + GTP = N(6)-(1,2-dicarboxyethyl)-AMP + GDP + phosphate + 2 H(+). It participates in purine metabolism; AMP biosynthesis via de novo pathway; AMP from IMP: step 1/2. In terms of biological role, plays an important role in the de novo pathway of purine nucleotide biosynthesis. Catalyzes the first committed step in the biosynthesis of AMP from IMP. The polypeptide is Adenylosuccinate synthetase (Polynucleobacter necessarius subsp. necessarius (strain STIR1)).